Reading from the N-terminus, the 502-residue chain is Cobyric acid synthase (502 aa).

The GATase cobBQ-type domain occupies 260–433 (ILRVAVCAIP…WHGSLESDGF (174 aa)). Catalysis depends on cysteine 341, which acts as the Nucleophile. Residue histidine 425 is part of the active site.

The protein belongs to the CobB/CobQ family. CobQ subfamily.

It participates in cofactor biosynthesis; adenosylcobalamin biosynthesis. Catalyzes amidations at positions B, D, E, and G on adenosylcobyrinic A,C-diamide. NH(2) groups are provided by glutamine, and one molecule of ATP is hydrogenolyzed for each amidation. This Streptomyces avermitilis (strain ATCC 31267 / DSM 46492 / JCM 5070 / NBRC 14893 / NCIMB 12804 / NRRL 8165 / MA-4680) protein is Cobyric acid synthase.